The following is a 359-amino-acid chain: UbiA prenyltransferase domain-containing protein 1 homolog (359 aa).

The span at Met1–Asn16 shows a compositional bias: polar residues. The interval Met1–Asp23 is disordered. 8 consecutive transmembrane segments (helical) span residues Ala67–Arg89, Leu98–Val118, Val148–Val168, Leu177–Phe197, Ile200–Phe220, Ile262–Ala284, Phe289–Phe311, and Phe335–Gly355.

It belongs to the UbiA prenyltransferase family.

It localises to the mitochondrion membrane. The protein operates within quinol/quinone metabolism; menaquinone biosynthesis. Prenyltransferase that mediates the formation of menaquinone-4 (MK-4), a vitamin K2 isoform, thereby acting as a mitochondrial electron carrier. Mediates the conversion of phylloquinone (PK) into MK-4, probably by cleaving the side chain of phylloquinone (PK) to release 2-methyl-1,4-naphthoquinone (menadione; K3) and then prenylating it with geranylgeranyl pyrophosphate (GGPP) to form MK-4. MK-4 acts as a membrane electron carrier downstream of a electron transport chain complex, improving mitochondrial oxygen consumption. In Drosophila melanogaster (Fruit fly), this protein is UbiA prenyltransferase domain-containing protein 1 homolog (heix).